A 463-amino-acid polypeptide reads, in one-letter code: MPGKIGKVVQVIGPVVDIKFDSDSLPNLYNAISIDMGERTLIAEVEQHVGDDIVRTIAMEATEGLKRGMDAVDTEKAISVPVGDQVLGRLFNVLGKPIDNAGEVEAEEIYPIHRPAPSFKDQAVEPEMFETGIKVIDLLAPYQRGGKIGLFGGAGVGKTVLIQELINNIAKEHGGLSVFTGVGERSREGNDLYHEMRESGVIDKTALVFGQMNEPPGARMRVALTGLTMAEYFRDKGQDVLLFIDNIFRFTQAGSEVSALLGRIPSAVGYQPTLATEMGALQERITSTKNGSITSVQAVYVPADDLTDPAPATTFSHLDATTVLSRSIVELGIYPAVDPLESSSRILDPRLVGEEHYNVATKVKNILERYKELQDIIAILGVDELSDEDKAVVSRARKVQRFLSQPFTVGEQFTGMPGKYVSVKETIKGFKEILEGKYDDLPESAFLFIGSVEEAVQKAKSLA.

An ATP-binding site is contributed by 152–159 (GGAGVGKT).

Belongs to the ATPase alpha/beta chains family. As to quaternary structure, F-type ATPases have 2 components, CF(1) - the catalytic core - and CF(0) - the membrane proton channel. CF(1) has five subunits: alpha(3), beta(3), gamma(1), delta(1), epsilon(1). CF(0) has three main subunits: a(1), b(2) and c(9-12). The alpha and beta chains form an alternating ring which encloses part of the gamma chain. CF(1) is attached to CF(0) by a central stalk formed by the gamma and epsilon chains, while a peripheral stalk is formed by the delta and b chains.

The protein localises to the cell membrane. The enzyme catalyses ATP + H2O + 4 H(+)(in) = ADP + phosphate + 5 H(+)(out). Produces ATP from ADP in the presence of a proton gradient across the membrane. The catalytic sites are hosted primarily by the beta subunits. This Clostridium botulinum (strain Eklund 17B / Type B) protein is ATP synthase subunit beta.